We begin with the raw amino-acid sequence, 407 residues long: Tyrosine--tRNA ligase (407 aa).

Residue Tyr35 participates in L-tyrosine binding. A 'HIGH' region motif is present at residues 40–49; the sequence is PTADSLHVGH. Positions 168 and 172 each coordinate L-tyrosine. The 'KMSKS' region signature appears at 228-232; that stretch reads KMGKT. Residue Lys231 coordinates ATP. The S4 RNA-binding domain maps to 341 to 405; it reads NSLVDLLAKC…RGKKNFNRIV (65 aa).

The protein belongs to the class-I aminoacyl-tRNA synthetase family. TyrS type 1 subfamily. As to quaternary structure, homodimer.

The protein localises to the cytoplasm. It catalyses the reaction tRNA(Tyr) + L-tyrosine + ATP = L-tyrosyl-tRNA(Tyr) + AMP + diphosphate + H(+). Catalyzes the attachment of tyrosine to tRNA(Tyr) in a two-step reaction: tyrosine is first activated by ATP to form Tyr-AMP and then transferred to the acceptor end of tRNA(Tyr). This Clostridium botulinum (strain Loch Maree / Type A3) protein is Tyrosine--tRNA ligase.